A 425-amino-acid polypeptide reads, in one-letter code: Alpha-(1,3)-fucosyltransferase C (425 aa).

The Cytoplasmic segment spans residues 1-37 (MYLGRVHCSFEVPGLLSGRVGHMSMAVRSVRLACGPR). The chain crosses the membrane as a helical; Signal-anchor for type II membrane protein span at residues 38-58 (GALLLLLLVLLGVLVVLHKVT). Topologically, residues 59–425 (QSPLLNQNKI…SCRLQSRIRL (367 aa)) are lumenal. N-linked (GlcNAc...) asparagine glycosylation is found at Asn-187 and Asn-230.

This sequence belongs to the glycosyltransferase 10 family.

The protein localises to the golgi apparatus. The protein resides in the golgi stack membrane. It participates in protein modification; protein glycosylation. The sequence is that of Alpha-(1,3)-fucosyltransferase C (FucTC) from Drosophila melanogaster (Fruit fly).